The chain runs to 364 residues: Homeobox protein KNOX3 (364 aa).

Residues 13-49 are disordered; sequence TAHGQHHSQLPWGSSPLSAVISPPPQQQQQHQQQSAG. The segment covering 19 to 29 has biased composition (polar residues); it reads HSQLPWGSSPL. The ELK domain occupies 246–266; that stretch reads ELKHHLLKKYSGYLSSLKQEL. The segment at residues 267–330 is a DNA-binding region (homeobox; TALE-type); it reads SKKKKKGKLP…NQRKRHWKPT (64 aa).

This sequence belongs to the TALE/KNOX homeobox family. As to quaternary structure, binds DNA as a monomer. The unit of inflorescence is the spikelet, which bears a fertile tract, the lemma, and the floret consisting of palea, two lodicules, three stamens and the pistil. The lemma is completed by the awn, an appendage homologous to the laminae of normal leaves. Expressed in the inflorescences and lemmas and at lower levels, in palea and vascular bundles.

Its subcellular location is the nucleus. May play a role in meristem formation and/or maintenance. Overexpression causes the hooded phenotype characterized by the appearance of an extra flower of inverse polarity on the lemma. Binds to the DNA sequence 5'-TGAC-3'. This is Homeobox protein KNOX3 (KNOX3) from Hordeum vulgare (Barley).